Reading from the N-terminus, the 529-residue chain is Glucose transporter 2A (529 aa).

The segment at 1-22 (MTERRDNVSHAPDAIEGPNDGA) is disordered. At 1–43 (MTERRDNVSHAPDAIEGPNDGAHAEDTSPGFFSFENLGVAQVQ) the chain is on the cytoplasmic side. The helical transmembrane segment at 44-64 (VVGGTLNGFSIGFVAVYILLY) threads the bilayer. Residues 65 to 119 (EVATNCSLFKTTEACKAVGSYGCEWKDTEVCSWKKECDSDSDGVNPCESLIGYSS) are Extracellular-facing. Residues 120-140 (LYSGIFASAMIVGSMVGSIIA) form a helical membrane-spanning segment. At 141–152 (GKCITMFGLKKS) the chain is on the cytoplasmic side. Residues 153 to 173 (FIIVGVMSVVASALNHISVAT) form a helical membrane-spanning segment. At 174 to 175 (NE) the chain is on the extracellular side. A helical membrane pass occupies residues 176-196 (FWVLCAGRVLMGIGLGVVCVI). Topologically, residues 197–214 (CPMYVNENAHPKLSKVDG) are cytoplasmic. Residues 215–235 (VLFQVFITFGIMLAAMLGLIL) form a helical membrane-spanning segment. The Extracellular portion of the chain corresponds to 236-250 (DKTVNYDNDPDMAGR). The helical transmembrane segment at 251–271 (FHGFCAVSSVLSVAMFLVGMF) threads the bilayer. The Cytoplasmic segment spans residues 272-300 (LRESTATFSQDDDGKADGGMDPNEYGWGQ). The helical transmembrane segment at 301–321 (MLWPLFMGAVTAGTLQLTGIN) threads the bilayer. Over 322–339 (AVMNYAPKITENLGMDPS) the chain is Extracellular. A helical membrane pass occupies residues 340-360 (LGNFLVMAWNFVTSLVAIPLA). The Cytoplasmic portion of the chain corresponds to 361–368 (SRFTMRQM). A helical membrane pass occupies residues 369-389 (FITCSFVASCMCLFLCGIPVF). Over 390-404 (PGVAEEKVKNGVATT) the chain is Extracellular. The helical transmembrane segment at 405-425 (GIALFIAAFEFGVGSCFFVLA) threads the bilayer. Topologically, residues 426–439 (QDLFPPSFRPKGSS) are cytoplasmic. A helical transmembrane segment spans residues 440–460 (FVVMMQFIFNILINLLYPITT). The Extracellular segment spans residues 461–476 (EAISGGATGDQDKGQA). Residues 477 to 497 (VVFILFGLIGLICFVLQFFYL) traverse the membrane as a helical segment. The Cytoplasmic segment spans residues 498–529 (YPYDANQDHENDHGTEPVERILSPVDVPTPRN). Residues 508–529 (NDHGTEPVERILSPVDVPTPRN) form a disordered region.

The protein belongs to the major facilitator superfamily. Sugar transporter (TC 2.A.1.1) family.

It localises to the membrane. Its function is as follows. Facilitative glucose transporter. The chain is Glucose transporter 2A (THT2A) from Trypanosoma brucei brucei.